We begin with the raw amino-acid sequence, 1385 residues long: DNA-directed RNA polymerase subunit beta' (1385 aa).

Residues cysteine 72, cysteine 74, cysteine 87, and cysteine 90 each coordinate Zn(2+). Residues aspartate 463, aspartate 465, and aspartate 467 each coordinate Mg(2+). Zn(2+)-binding residues include cysteine 813, cysteine 887, cysteine 894, and cysteine 897.

This sequence belongs to the RNA polymerase beta' chain family. The RNAP catalytic core consists of 2 alpha, 1 beta, 1 beta' and 1 omega subunit. When a sigma factor is associated with the core the holoenzyme is formed, which can initiate transcription. It depends on Mg(2+) as a cofactor. The cofactor is Zn(2+).

It carries out the reaction RNA(n) + a ribonucleoside 5'-triphosphate = RNA(n+1) + diphosphate. Functionally, DNA-dependent RNA polymerase catalyzes the transcription of DNA into RNA using the four ribonucleoside triphosphates as substrates. The polypeptide is DNA-directed RNA polymerase subunit beta' (Trichlorobacter lovleyi (strain ATCC BAA-1151 / DSM 17278 / SZ) (Geobacter lovleyi)).